Here is a 341-residue protein sequence, read N- to C-terminus: Probable galacturonosyltransferase-like 2 (341 aa).

The Cytoplasmic segment spans residues 1–4 (MHSK). Residues 5–22 (FILYLSILAVFTVSFAGG) form a helical; Signal-anchor for type II membrane protein membrane-spanning segment. Topologically, residues 23–341 (ERFKEAPKFF…LESRFDLIES (319 aa)) are lumenal. N190 carries an N-linked (GlcNAc...) asparagine glycan.

This sequence belongs to the glycosyltransferase 8 family.

The protein resides in the golgi apparatus membrane. It functions in the pathway glycan metabolism; pectin biosynthesis. Its function is as follows. May be involved in pectin and/or xylans biosynthesis in cell walls. This Arabidopsis thaliana (Mouse-ear cress) protein is Probable galacturonosyltransferase-like 2 (GATL2).